Here is a 658-residue protein sequence, read N- to C-terminus: Exoribonuclease 2 (658 aa).

Residues 189 to 530 (REDLTSLYFT…VNHRLIKQVL (342 aa)) form the RNB domain. The S1 motif domain maps to 576-658 (AVEFDCEIAD…ETRSIVGNII (83 aa)).

This sequence belongs to the RNR ribonuclease family. RNase II subfamily.

Its subcellular location is the cytoplasm. The enzyme catalyses Exonucleolytic cleavage in the 3'- to 5'-direction to yield nucleoside 5'-phosphates.. Involved in mRNA degradation. Hydrolyzes single-stranded polyribonucleotides processively in the 3' to 5' direction. This chain is Exoribonuclease 2, found in Actinobacillus pleuropneumoniae serotype 5b (strain L20).